A 376-amino-acid polypeptide reads, in one-letter code: Glycerol-3-phosphate acyltransferase 9 (376 aa).

The Cytoplasmic segment spans residues 1-78 (MSSTAGRLVT…SNPPEPWNWN (78 aa)). Serine 13 is modified (phosphoserine). 3 consecutive transmembrane segments (helical) span residues 79–99 (IYLF…LFPL), 102–122 (FTLA…NALL), and 135–155 (VLVE…VKYH). Over 156–376 (GPRPSIRPKQ…ESILARLEEK (221 aa)) the chain is Cytoplasmic. Residues 168-180 (VANHTSMIDFIVL) form a catalytic region. The HXXXXD motif signature appears at 171-176 (HTSMID). 209-218 (GCIWFNRSEA) is a binding site for sn-glycerol 3-phosphate. Residues 242–262 (IFPEGTCVNNNYTVMFKKGAF) form a glycerol-3-phosphate binding region. A catalytic region spans residues 266–275 (CTVCPIAIKY). The interval 369–373 (ILARL) is endoplasmic reticulum targeting.

Belongs to the 1-acyl-sn-glycerol-3-phosphate acyltransferase family. Self-interacts. Interacts with LPAT2 and LPCAT2. Up-regulated during embryogenesis. Expressed in seedlings, leaves, stems, roots, floral buds, flowers, pollen, and siliques at various developmental stages.

It is found in the endoplasmic reticulum membrane. The catalysed reaction is sn-glycerol 3-phosphate + an acyl-CoA = a 1-acyl-sn-glycero-3-phosphate + CoA. It functions in the pathway glycerolipid metabolism; triacylglycerol biosynthesis. Its function is as follows. Essential protein. Required for male and female gametophytes development. Exhibits sn-1 acyltransferase activity with high specificity for acyl-coenzyme A, thus triggering storage lipid biosynthesis and playing an important role in the Kennedy pathway of glycerolipid biosynthesis. Catalyzes triacylglycerol (TAG) accumulation involved in membrane lipid and oil biosynthesis, especially in seeds. Also contributes to the biosynthesis of both polar lipids and TAG in developing leaves, as well as lipid droplet production in developing pollen grains. Seems to not contribute to surface lipid biosynthesis (e.g. waxes and cutin). The sequence is that of Glycerol-3-phosphate acyltransferase 9 from Arabidopsis thaliana (Mouse-ear cress).